The primary structure comprises 316 residues: ATP synthase gamma chain (316 aa).

This sequence belongs to the ATPase gamma chain family. In terms of assembly, F-type ATPases have 2 components, CF(1) - the catalytic core - and CF(0) - the membrane proton channel. CF(1) has five subunits: alpha(3), beta(3), gamma(1), delta(1), epsilon(1). CF(0) has three main subunits: a, b and c.

Its subcellular location is the cellular thylakoid membrane. In terms of biological role, produces ATP from ADP in the presence of a proton gradient across the membrane. The gamma chain is believed to be important in regulating ATPase activity and the flow of protons through the CF(0) complex. This Prochlorococcus marinus subsp. pastoris (strain CCMP1986 / NIES-2087 / MED4) protein is ATP synthase gamma chain.